Consider the following 191-residue polypeptide: Ribosomal RNA small subunit methyltransferase G (191 aa).

S-adenosyl-L-methionine contacts are provided by residues G62, F67, 111–112 (IE), and R124.

Belongs to the methyltransferase superfamily. RNA methyltransferase RsmG family.

It is found in the cytoplasm. The enzyme catalyses guanosine(527) in 16S rRNA + S-adenosyl-L-methionine = N(7)-methylguanosine(527) in 16S rRNA + S-adenosyl-L-homocysteine. Its function is as follows. Specifically methylates the N7 position of guanine in position 527 of 16S rRNA. In Rickettsia prowazekii (strain Madrid E), this protein is Ribosomal RNA small subunit methyltransferase G.